The primary structure comprises 119 residues: Large ribosomal subunit protein bL20 (119 aa).

The protein belongs to the bacterial ribosomal protein bL20 family.

In terms of biological role, binds directly to 23S ribosomal RNA and is necessary for the in vitro assembly process of the 50S ribosomal subunit. It is not involved in the protein synthesizing functions of that subunit. In Afipia carboxidovorans (strain ATCC 49405 / DSM 1227 / KCTC 32145 / OM5) (Oligotropha carboxidovorans), this protein is Large ribosomal subunit protein bL20.